Consider the following 65-residue polypeptide: DNA-directed RNA polymerase subunit omega (65 aa).

This sequence belongs to the RNA polymerase subunit omega family. In terms of assembly, the RNAP catalytic core consists of 2 alpha, 1 beta, 1 beta' and 1 omega subunit. When a sigma factor is associated with the core the holoenzyme is formed, which can initiate transcription.

It catalyses the reaction RNA(n) + a ribonucleoside 5'-triphosphate = RNA(n+1) + diphosphate. Functionally, promotes RNA polymerase assembly. Latches the N- and C-terminal regions of the beta' subunit thereby facilitating its interaction with the beta and alpha subunits. The polypeptide is DNA-directed RNA polymerase subunit omega (Finegoldia magna (strain ATCC 29328 / DSM 20472 / WAL 2508) (Peptostreptococcus magnus)).